The primary structure comprises 374 residues: tRNA-specific 2-thiouridylase MnmA (374 aa).

Residues G17–S24 and M43 each bind ATP. An interaction with target base in tRNA region spans residues N103–D105. Residue C108 is the Nucleophile of the active site. A disulfide bridge links C108 with C204. An ATP-binding site is contributed by G132. An interaction with tRNA region spans residues K154–Q156. The active-site Cysteine persulfide intermediate is C204. The segment at R316–Y317 is interaction with tRNA.

It belongs to the MnmA/TRMU family.

It is found in the cytoplasm. The enzyme catalyses S-sulfanyl-L-cysteinyl-[protein] + uridine(34) in tRNA + AH2 + ATP = 2-thiouridine(34) in tRNA + L-cysteinyl-[protein] + A + AMP + diphosphate + H(+). Functionally, catalyzes the 2-thiolation of uridine at the wobble position (U34) of tRNA, leading to the formation of s(2)U34. This is tRNA-specific 2-thiouridylase MnmA from Pseudomonas putida (strain GB-1).